Reading from the N-terminus, the 266-residue chain is Ras-like protein family member 12 (266 aa).

GTP is bound by residues glycine 27–serine 34, aspartate 74–leucine 78, and asparagine 134–aspartate 137.

This sequence belongs to the small GTPase superfamily. Ras family.

It catalyses the reaction GTP + H2O = GDP + phosphate + H(+). This Homo sapiens (Human) protein is Ras-like protein family member 12 (RASL12).